We begin with the raw amino-acid sequence, 154 residues long: S-ribosylhomocysteine lyase (154 aa).

Fe cation-binding residues include H58, H62, and C125.

It belongs to the LuxS family. Homodimer. Fe cation is required as a cofactor.

The enzyme catalyses S-(5-deoxy-D-ribos-5-yl)-L-homocysteine = (S)-4,5-dihydroxypentane-2,3-dione + L-homocysteine. Involved in the synthesis of autoinducer 2 (AI-2) which is secreted by bacteria and is used to communicate both the cell density and the metabolic potential of the environment. The regulation of gene expression in response to changes in cell density is called quorum sensing. Catalyzes the transformation of S-ribosylhomocysteine (RHC) to homocysteine (HC) and 4,5-dihydroxy-2,3-pentadione (DPD). The polypeptide is S-ribosylhomocysteine lyase (Dichelobacter nodosus (strain VCS1703A)).